A 366-amino-acid polypeptide reads, in one-letter code: S-adenosylmethionine:tRNA ribosyltransferase-isomerase (366 aa).

This sequence belongs to the QueA family. As to quaternary structure, monomer.

It localises to the cytoplasm. The catalysed reaction is 7-aminomethyl-7-carbaguanosine(34) in tRNA + S-adenosyl-L-methionine = epoxyqueuosine(34) in tRNA + adenine + L-methionine + 2 H(+). It participates in tRNA modification; tRNA-queuosine biosynthesis. In terms of biological role, transfers and isomerizes the ribose moiety from AdoMet to the 7-aminomethyl group of 7-deazaguanine (preQ1-tRNA) to give epoxyqueuosine (oQ-tRNA). In Caulobacter vibrioides (strain ATCC 19089 / CIP 103742 / CB 15) (Caulobacter crescentus), this protein is S-adenosylmethionine:tRNA ribosyltransferase-isomerase.